Consider the following 920-residue polypeptide: Nitrate reductase [NADH] (920 aa).

Residues 1-69 form a disordered region; that stretch reads MAASVENRQF…DTSDDEEDEA (69 aa). The span at 60-69 shows a compositional bias: acidic residues; sequence DTSDDEEDEA. Cys-185 is a Mo-molybdopterin binding site. Positions 534 to 609 constitute a Cytochrome b5 heme-binding domain; it reads SLTFTMSEVK…LEEYRVGELI (76 aa). Residues His-569 and His-592 each contribute to the heme site. The FAD-binding FR-type domain maps to 663–775; the sequence is REKIPCKLIS…KGPLGHIEYM (113 aa). Residues 715–718, 732–736, Phe-737, Phe-744, 749–751, and Thr-802 contribute to the FAD site; these read RAYT, LVKIY, and LMS.

It belongs to the nitrate reductase family. As to quaternary structure, homodimer. It depends on FAD as a cofactor. Heme is required as a cofactor. Mo-molybdopterin serves as cofactor. In terms of tissue distribution, in cortical cells of roots grown at low nitrate concentrations, in vascular tissues of roots at high nitrate concentrations and in root apex under both conditions.

It catalyses the reaction nitrite + NAD(+) + H2O = nitrate + NADH + H(+). In terms of biological role, nitrate reductase is a key enzyme involved in the first step of nitrate assimilation in plants, fungi and bacteria. The protein is Nitrate reductase [NADH] (NIA) of Cichorium intybus (Chicory).